A 129-amino-acid chain; its full sequence is Glycine cleavage system H protein (129 aa).

A Lipoyl-binding domain is found at 24–106; sequence SYTVGISEHA…FGDGWFFRVM (83 aa). At K65 the chain carries N6-lipoyllysine.

Belongs to the GcvH family. As to quaternary structure, the glycine cleavage system is composed of four proteins: P, T, L and H. Requires (R)-lipoate as cofactor.

In terms of biological role, the glycine cleavage system catalyzes the degradation of glycine. The H protein shuttles the methylamine group of glycine from the P protein to the T protein. In Shewanella sediminis (strain HAW-EB3), this protein is Glycine cleavage system H protein.